Here is a 116-residue protein sequence, read N- to C-terminus: Transcriptional regulator WhiB4 (116 aa).

A 4Fe-4S Wbl-type domain is found at 36 to 92; that stretch reads LCRATDPDELFVRGAAQRKAAVICRHCPVMQECGADALDNKVEFGVWGGMTERQRRA. Cysteine 37, cysteine 59, cysteine 62, and cysteine 68 together coordinate [4Fe-4S] cluster.

It belongs to the WhiB family. The cofactor is [4Fe-4S] cluster. The Fe-S cluster can be nitrosylated by nitric oxide (NO). In terms of processing, upon Fe-S cluster removal intramolecular disulfide bonds are formed.

The protein localises to the cytoplasm. Acts as a transcriptional regulator. Probably redox-responsive. The apo- but not holo-form probably binds DNA. Plays a role in lipooligosaccharide (LOS) biosynthesis by regulating LOS gene expression. The chain is Transcriptional regulator WhiB4 (whiB4) from Mycobacterium marinum (strain ATCC BAA-535 / M).